A 396-amino-acid polypeptide reads, in one-letter code: Deoxyguanosinetriphosphate triphosphohydrolase-like protein (396 aa).

Positions 69 to 211 constitute an HD domain; the sequence is RLSHSLEVSQ…AALADDIAYN (143 aa).

The protein belongs to the dGTPase family. Type 2 subfamily.

This is Deoxyguanosinetriphosphate triphosphohydrolase-like protein from Parvibaculum lavamentivorans (strain DS-1 / DSM 13023 / NCIMB 13966).